The sequence spans 1639 residues: RIMS-binding protein 3A (1639 aa).

3 disordered regions span residues 1-22 (MAKDSPSPLGASPKKPGCSSPA), 215-240 (GSPDPQAVHSLEEPLPQTSSGSCHAP), and 295-364 (SLDS…LTPS). Positions 21–143 (PAAAVLENQR…ELQRQLAEEL (123 aa)) form a coiled coil. Over residues 326–339 (SPPPSPLPPPPPPS) the composition is skewed to pro residues. 2 coiled-coil regions span residues 409–442 (QADEKVKRLKVKRAELTGLARRLADRARKLQETN) and 480–619 (LAKD…AEEN). Positions 697–811 (CRPGHPPEQP…DRDTASEVDD (115 aa)) are disordered. Composition is skewed to polar residues over residues 707 to 718 (WETSQMPESQVK) and 761 to 775 (SVPQVSETVPASQPL). Residues 776–790 (SKKTSSQSNSSSEGS) show a composition bias toward low complexity. Residues 832 to 899 (PKLKIFMAQY…PSNFVEQIPD (68 aa)) form the SH3 1 domain. 2 consecutive Fibronectin type-III domains span residues 995–1083 (APMQ…TLLA) and 1088–1184 (PPLD…IPED). Disordered regions lie at residues 1251–1273 (PRRQSPVSNLGSEGECPSSGAGS) and 1292–1330 (QKSPQNHRPPSVSDQPGEKENCSQHMGTSKSPAPGFIHL). The segment covering 1293–1305 (KSPQNHRPPSVSD) has biased composition (polar residues). SH3 domains follow at residues 1452–1520 (TPAR…EMEV) and 1569–1636 (WTPK…HMSL).

Belongs to the RIMBP family. In terms of assembly, interacts with LRGUK (via guanylate kinase-like domain). Interacts (via C-terminus) with HOOK1 (via coiled-coil region).

The protein localises to the cytoplasm. It localises to the cytoskeleton. In terms of biological role, probable component of the manchette, a microtubule-based structure which plays a key role in sperm head morphogenesis during late stages of sperm development. The polypeptide is RIMS-binding protein 3A (RIMBP3) (Homo sapiens (Human)).